A 501-amino-acid polypeptide reads, in one-letter code: Aldehyde dehydrogenase, cytosolic 1 (501 aa).

246-251 is a binding site for NAD(+); it reads GSTEVG. Residue Glu-269 is the Proton acceptor of the active site. Cys-303 serves as the catalytic Nucleophile.

The protein belongs to the aldehyde dehydrogenase family. In terms of assembly, homotetramer. Eye specific, with very high expression in the lens.

Its subcellular location is the cytoplasm. The catalysed reaction is an aldehyde + NAD(+) + H2O = a carboxylate + NADH + 2 H(+). It participates in alcohol metabolism; ethanol degradation; acetate from ethanol: step 2/2. Major component of the eye of elephant shrews, which in contrast to other mammals, possesses both a lens- and a non-lens class-1 aldehyde dehydrogenase 1. This eye-specific form is a structural protein of the lens and, in other part of the eye, serves as the major form of ALDH1. Can convert/oxidize retinaldehyde to retinoic acid. The polypeptide is Aldehyde dehydrogenase, cytosolic 1 (ALDH1) (Elephantulus edwardii (Cape long-eared elephant shrew)).